Consider the following 789-residue polypeptide: Probable Xaa-Pro aminopeptidase SNOG_02267 (789 aa).

Positions 240, 251, 375, and 416 each coordinate Mn(2+). Disordered regions lie at residues 607–658 and 670–704; these read SMSK…TGLA and NHVS…DDAL. Polar residues predominate over residues 622–637; that stretch reads VISQKQIRNRRSVSST. Positions 638-650 are enriched in basic and acidic residues; that stretch reads ARHDLRGDRERPQ.

This sequence belongs to the peptidase M24B family. Mn(2+) is required as a cofactor.

The catalysed reaction is Release of any N-terminal amino acid, including proline, that is linked to proline, even from a dipeptide or tripeptide.. Functionally, catalyzes the removal of a penultimate prolyl residue from the N-termini of peptides. This is Probable Xaa-Pro aminopeptidase SNOG_02267 from Phaeosphaeria nodorum (strain SN15 / ATCC MYA-4574 / FGSC 10173) (Glume blotch fungus).